The chain runs to 386 residues: Patatin-2-Kuras 2 (386 aa).

The signal sequence occupies residues Met1–Ala23. Residues Leu32 to Leu229 enclose the PNPLA domain. The short motif at Gly36–Gly41 is the GXGXXG element. Residues Gly75 to Gly79 carry the GXSXG motif. The Nucleophile role is filled by Ser77. An N-linked (GlcNAc...) asparagine glycan is attached at Asn115. The Proton acceptor role is filled by Asp215. The short motif at Asp215–Ala217 is the DGA/G element. Residues Glu321–Ala384 adopt a coiled-coil conformation.

The protein belongs to the patatin family.

It localises to the vacuole. In terms of biological role, probable lipolytic acyl hydrolase (LAH), an activity which is thought to be involved in the response of tubers to pathogens. This is Patatin-2-Kuras 2 (pat2-k2) from Solanum tuberosum (Potato).